The sequence spans 479 residues: Aspartyl/glutamyl-tRNA(Asn/Gln) amidotransferase subunit B (479 aa).

This sequence belongs to the GatB/GatE family. GatB subfamily. As to quaternary structure, heterotrimer of A, B and C subunits.

It carries out the reaction L-glutamyl-tRNA(Gln) + L-glutamine + ATP + H2O = L-glutaminyl-tRNA(Gln) + L-glutamate + ADP + phosphate + H(+). The catalysed reaction is L-aspartyl-tRNA(Asn) + L-glutamine + ATP + H2O = L-asparaginyl-tRNA(Asn) + L-glutamate + ADP + phosphate + 2 H(+). In terms of biological role, allows the formation of correctly charged Asn-tRNA(Asn) or Gln-tRNA(Gln) through the transamidation of misacylated Asp-tRNA(Asn) or Glu-tRNA(Gln) in organisms which lack either or both of asparaginyl-tRNA or glutaminyl-tRNA synthetases. The reaction takes place in the presence of glutamine and ATP through an activated phospho-Asp-tRNA(Asn) or phospho-Glu-tRNA(Gln). This is Aspartyl/glutamyl-tRNA(Asn/Gln) amidotransferase subunit B from Mycoplasma capricolum subsp. capricolum (strain California kid / ATCC 27343 / NCTC 10154).